Reading from the N-terminus, the 350-residue chain is Casein kinase II subunit alpha' (350 aa).

Tyr-13 is modified (phosphotyrosine). Ser-18 and Ser-21 each carry phosphoserine. The region spanning 40 to 325 (YQLVRKLGRG…AKEAMEHPYF (286 aa)) is the Protein kinase domain. ATP contacts are provided by residues 46–54 (LGRGKYSEV) and Lys-69. Position 97 is an N6-acetyllysine (Lys-97). Asp-157 (proton acceptor) is an active-site residue. Ser-288 is subject to Phosphoserine.

This sequence belongs to the protein kinase superfamily. Ser/Thr protein kinase family. CK2 subfamily. Heterotetramer composed of two catalytic subunits (alpha chain and/or alpha' chain) and two regulatory subunits (beta chains). The tetramer can exist as a combination of 2 alpha/2 beta, 2 alpha'/2 beta or 1 alpha/1 alpha'/2 beta subunits. Also part of a CK2-SPT16-SSRP1 complex composed of SSRP1, SUPT16H, CSNK2A1, CSNK2A2 and CSNK2B, which forms following UV irradiation. Interacts with RNPS1. Interacts with CSNK2A2IP (via C-terminus). Interacts with SIRT6; preventing CSNK2A2 localization to the nucleus. Interacts with HIRIP3. As to expression, highly expressed in brain, testis and mature epididymal spermatozoa. Weakly expressed in kidney, liver, lung, spleen and thymus (at protein level).

It localises to the nucleus. It is found in the cytoplasm. The enzyme catalyses L-seryl-[protein] + ATP = O-phospho-L-seryl-[protein] + ADP + H(+). The catalysed reaction is L-threonyl-[protein] + ATP = O-phospho-L-threonyl-[protein] + ADP + H(+). Its activity is regulated as follows. Constitutively active protein kinase whose activity is not directly affected by phosphorylation. Seems to be regulated by level of expression and localization. Functionally, catalytic subunit of a constitutively active serine/threonine-protein kinase complex that phosphorylates a large number of substrates containing acidic residues C-terminal to the phosphorylated serine or threonine. Regulates numerous cellular processes, such as cell cycle progression, apoptosis and transcription, as well as viral infection. May act as a regulatory node which integrates and coordinates numerous signals leading to an appropriate cellular response. During mitosis, functions as a component of the p53/TP53-dependent spindle assembly checkpoint (SAC) that maintains cyclin-B-CDK1 activity and G2 arrest in response to spindle damage. Also required for p53/TP53-mediated apoptosis, phosphorylating 'Ser-392' of p53/TP53 following UV irradiation. Phosphorylates a number of DNA repair proteins in response to DNA damage, such as MDC1, RAD9A, RAD51 and HTATSF1, promoting their recruitment to DNA damage sites. Can also negatively regulate apoptosis. Phosphorylates the caspases CASP9 and CASP2 and the apoptotic regulator NOL3. Phosphorylation protects CASP9 from cleavage and activation by CASP8, and inhibits the dimerization of CASP2 and activation of CASP8. Regulates transcription by direct phosphorylation of RNA polymerases I, II, III and IV. Also phosphorylates and regulates numerous transcription factors including NF-kappa-B, STAT1, CREB1, IRF1, IRF2, ATF1, SRF, MAX, JUN, FOS, MYC and MYB. Phosphorylates Hsp90 and its co-chaperones FKBP4 and CDC37, which is essential for chaperone function. Regulates Wnt signaling by phosphorylating CTNNB1 and the transcription factor LEF1. Acts as an ectokinase that phosphorylates several extracellular proteins. May phosphorylate histone H2A on 'Ser-1'. The polypeptide is Casein kinase II subunit alpha' (Csnk2a2) (Mus musculus (Mouse)).